We begin with the raw amino-acid sequence, 61 residues long: Small ribosomal subunit protein uS14B (61 aa).

4 residues coordinate Zn(2+): cysteine 24, cysteine 27, cysteine 40, and cysteine 43.

The protein belongs to the universal ribosomal protein uS14 family. Zinc-binding uS14 subfamily. As to quaternary structure, part of the 30S ribosomal subunit. Contacts proteins S3 and S10. It depends on Zn(2+) as a cofactor.

In terms of biological role, binds 16S rRNA, required for the assembly of 30S particles and may also be responsible for determining the conformation of the 16S rRNA at the A site. The polypeptide is Small ribosomal subunit protein uS14B (Mycolicibacterium smegmatis (strain ATCC 700084 / mc(2)155) (Mycobacterium smegmatis)).